A 405-amino-acid polypeptide reads, in one-letter code: Probable tRNA sulfurtransferase (405 aa).

A THUMP domain is found at 60-165 (DQVMARLSQV…REAIYLSTKT (106 aa)). Residues 183–184 (ML), 208–209 (HF), Arg-265, Gly-287, and Gln-296 each bind ATP.

Belongs to the ThiI family.

The protein resides in the cytoplasm. It carries out the reaction [ThiI sulfur-carrier protein]-S-sulfanyl-L-cysteine + a uridine in tRNA + 2 reduced [2Fe-2S]-[ferredoxin] + ATP + H(+) = [ThiI sulfur-carrier protein]-L-cysteine + a 4-thiouridine in tRNA + 2 oxidized [2Fe-2S]-[ferredoxin] + AMP + diphosphate. It catalyses the reaction [ThiS sulfur-carrier protein]-C-terminal Gly-Gly-AMP + S-sulfanyl-L-cysteinyl-[cysteine desulfurase] + AH2 = [ThiS sulfur-carrier protein]-C-terminal-Gly-aminoethanethioate + L-cysteinyl-[cysteine desulfurase] + A + AMP + 2 H(+). It functions in the pathway cofactor biosynthesis; thiamine diphosphate biosynthesis. In terms of biological role, catalyzes the ATP-dependent transfer of a sulfur to tRNA to produce 4-thiouridine in position 8 of tRNAs, which functions as a near-UV photosensor. Also catalyzes the transfer of sulfur to the sulfur carrier protein ThiS, forming ThiS-thiocarboxylate. This is a step in the synthesis of thiazole, in the thiamine biosynthesis pathway. The sulfur is donated as persulfide by IscS. This Lacticaseibacillus paracasei (strain ATCC 334 / BCRC 17002 / CCUG 31169 / CIP 107868 / KCTC 3260 / NRRL B-441) (Lactobacillus paracasei) protein is Probable tRNA sulfurtransferase.